The sequence spans 437 residues: MDTPLRGRRAAGRGVRARARPRTRRRHRNDHPLLAGRRYLRDDRVRLQDARKPPARARVPQLRGRDFALRRADRRVEHVPLRGRHPRVRRVPQRDQDGAPRRRHLLRRRVGGHRGRNRHAGDRRAPGVDSRLRQQHQHPRGRHASDRVQDGAHPRRQRLREQPRHAGRPRRRQPPRRGRSRGTHRRHLRQAPRPAVRGPDEDQAREFRGPRHRRERHPPTARDVLRGEPGHGDGHHLEGRRGRPRPQGREAGRGAHPPQVRARIYLAAGEARGLPEPRPLGVRTVHRGGRLRGRVGQAGPRPQVPGDFAPQGEDSERRETPPRPHSRKRRDTGAHHRHWRRRRRRVRHREGALPAAHPDDRRRRRRRAHPDAAAYASVPAHAPAHRGRLRVRGSTAAVPRPLPRQHLRRDGRGRAGPHHRGGMQRQPHAGPAVQGTR.

Basic residues-rich tracts occupy residues 1–29 (MDTP…RHRN), 81–91 (LRGRHPRVRRV), and 101–118 (RRRH…GRNR). Disordered regions lie at residues 1-31 (MDTP…RNDH) and 77-437 (EHVP…QGTR). The segment covering 119–132 (HAGDRRAPGVDSRL) has biased composition (basic and acidic residues). Over residues 133–142 (RQQHQHPRGR) the composition is skewed to basic residues. Residues 143-164 (HASDRVQDGAHPRRQRLREQPR) show a composition bias toward basic and acidic residues. Over residues 165-190 (HAGRPRRRQPPRRGRSRGTHRRHLRQ) the composition is skewed to basic residues. Composition is skewed to basic and acidic residues over residues 198-209 (GPDEDQAREFRG) and 217-253 (HPPT…EAGR). Composition is skewed to basic residues over residues 284–293 (TVHRGGRLRG) and 324–348 (PHSR…RVRH). A compositionally biased stretch (low complexity) spans 371–382 (DAAAYASVPAHA).

This is an uncharacterized protein from Haloferax lucentense (strain DSM 14919 / JCM 9276 / NCIMB 13854 / Aa 2.2) (Haloferax alicantei).